We begin with the raw amino-acid sequence, 64 residues long: Large ribosomal subunit protein bL32 (64 aa).

Positions 1–10 (MAVPKRKTTP) are enriched in basic residues. Positions 1–22 (MAVPKRKTTPSKRDMRRANHDK) are disordered. The segment covering 11–22 (SKRDMRRANHDK) has biased composition (basic and acidic residues).

It belongs to the bacterial ribosomal protein bL32 family.

This Sorangium cellulosum (strain So ce56) (Polyangium cellulosum (strain So ce56)) protein is Large ribosomal subunit protein bL32.